The following is a 313-amino-acid chain: tRNA dimethylallyltransferase (313 aa).

10–17 (GPTAVGKS) contacts ATP. 12-17 (TAVGKS) contacts substrate. The interval 35–38 (DSTQ) is interaction with substrate tRNA.

The protein belongs to the IPP transferase family. In terms of assembly, monomer. Requires Mg(2+) as cofactor.

The catalysed reaction is adenosine(37) in tRNA + dimethylallyl diphosphate = N(6)-dimethylallyladenosine(37) in tRNA + diphosphate. Catalyzes the transfer of a dimethylallyl group onto the adenine at position 37 in tRNAs that read codons beginning with uridine, leading to the formation of N6-(dimethylallyl)adenosine (i(6)A). The polypeptide is tRNA dimethylallyltransferase (Oceanobacillus iheyensis (strain DSM 14371 / CIP 107618 / JCM 11309 / KCTC 3954 / HTE831)).